A 669-amino-acid chain; its full sequence is MERNDAERKIEKLRNQLEEYGYHYYVLDKPLVSDAEYDGLMNELIELEEAFPELKSDTSPSVRVGGPPLPHFEKVEHRTPMLSLGNAFSDQDLRDFDRRVRQVVGDEVTYSCELKIDGLAISLIYESGRFVRGATRGDGTTGEDITQNLRTIPSIPLRLKEAVSLEVRGEAFMPKRSFEALNEAKEAAGEERFANPRNAAAGSLRQLDPKLAAKRHLDAFIYAIGSVEGKELHSHHEGLNYLKTIGFKINPESAYCESIDEVIDYVNSWLERRADLPYEIDGIVIKVDNVNFQEQLGYTAKSPRWAIAYKFPAEEVITTLLDITLNVGRTGVVTPTAELKPVTVAGTTVKRASLHNEDLIREKDIRLGDSVVVKKAGDIIPEVVNVLTELRTGEERPFSMPTHCPECGSELVRLEGEVALRCINPQCPAQIREGLIHFVSRQAMNIDGLGEKVITQLFEHGLIHNVADLYKLNKDELLQLERMGEKSVNNLLASIETSKKSSLERLLFGLGIRFVGSKAAKTLAMHFPTMTELRRASYDELIAVNEIGEKMAASIVSYFEKPEVNELIDELASLGVNMTYNGPKPIGEEEIADSPFAGKTVVLTGKLQALTRGEAKEKIEALGGKVTGSVSKNTDLLVAGEDAGSKLTKAKELNIEIWDEEALVKAISH.

NAD(+) is bound by residues 34–38 (DAEYD), 83–84 (SL), and Glu-113. Lys-115 acts as the N6-AMP-lysine intermediate in catalysis. Positions 136, 170, 286, and 310 each coordinate NAD(+). Positions 404, 407, 422, and 427 each coordinate Zn(2+). A BRCT domain is found at 591–669 (IADSPFAGKT…EEALVKAISH (79 aa)).

The protein belongs to the NAD-dependent DNA ligase family. LigA subfamily. Requires Mg(2+) as cofactor. It depends on Mn(2+) as a cofactor.

It carries out the reaction NAD(+) + (deoxyribonucleotide)n-3'-hydroxyl + 5'-phospho-(deoxyribonucleotide)m = (deoxyribonucleotide)n+m + AMP + beta-nicotinamide D-nucleotide.. Functionally, DNA ligase that catalyzes the formation of phosphodiester linkages between 5'-phosphoryl and 3'-hydroxyl groups in double-stranded DNA using NAD as a coenzyme and as the energy source for the reaction. It is essential for DNA replication and repair of damaged DNA. The protein is DNA ligase of Halalkalibacterium halodurans (strain ATCC BAA-125 / DSM 18197 / FERM 7344 / JCM 9153 / C-125) (Bacillus halodurans).